The following is a 400-amino-acid chain: MDRYDFPDAQGHFGPYGGVYVAETLMVALDQLKEEYARVKADPTFWQEFHHELKHYVGRPSPVYHAKRWSEQLGGAQIWFKREDLNHTGAHKINNAIGQALLARRMGKKRVIAETGAGQHGVATATVAARYGMECVVYMGAEDVKRQSPNVFRMKLLGATVVPVESGSKTLKDALNEAMRDWVTNVDSTFYILGTAAGPHPYPMLVRDFVSVIGAESKIQMPEAIGRQPDVVVACVGGGSNAIGMFHPYIEVPGVRMVGVEAGGHGVASGKHAAPISSGAPVGVLHGSKSYLMQDADGQIVETHSVSAGLDYPGVGPEHCHLKDIGRAEYVSIDDDEALRAFHDCCHLEGIIPALESSHALAWAAKVAPSMGKDQVILVNLSGRGDKDINTVAGLAGITL.

An N6-(pyridoxal phosphate)lysine modification is found at lysine 92.

The protein belongs to the TrpB family. Tetramer of two alpha and two beta chains. Pyridoxal 5'-phosphate serves as cofactor.

The catalysed reaction is (1S,2R)-1-C-(indol-3-yl)glycerol 3-phosphate + L-serine = D-glyceraldehyde 3-phosphate + L-tryptophan + H2O. The protein operates within amino-acid biosynthesis; L-tryptophan biosynthesis; L-tryptophan from chorismate: step 5/5. Its function is as follows. The beta subunit is responsible for the synthesis of L-tryptophan from indole and L-serine. This chain is Tryptophan synthase beta chain, found in Chromobacterium violaceum (strain ATCC 12472 / DSM 30191 / JCM 1249 / CCUG 213 / NBRC 12614 / NCIMB 9131 / NCTC 9757 / MK).